We begin with the raw amino-acid sequence, 137 residues long: Protein archease (137 aa).

Residues Asp11, Asp136, and Ile137 each contribute to the Ca(2+) site.

It belongs to the archease family.

In terms of biological role, activates the tRNA-splicing ligase complex by facilitating the enzymatic turnover of catalytic subunit RtcB. Acts by promoting the guanylylation of RtcB, a key intermediate step in tRNA ligation. Can also alter the NTP specificity of RtcB such that ATP, dGTP or ITP is used efficiently. The protein is Protein archease of Archaeoglobus fulgidus (strain ATCC 49558 / DSM 4304 / JCM 9628 / NBRC 100126 / VC-16).